Consider the following 557-residue polypeptide: MMSHTETSLGAENTRTHNFITQIIDEDLASGKHKSVHTRFPPEPNGYLHIGHAKSICLNFGLAKEYQGLCNLRFDDTNPVKEDVEYVDSIKADVEWLGFKWEGEPRYASDYFDALYGYAAELIKKGLAYVDELSPDEMREYRGTLTEPGKNSPYRDRTIEENLALFEKMKNGEFAEGKASLRAKIDMASPFMVMRDPVIYRIKFASHHQTGDKWCIYPMYDFTHCISDAIERITHSICTLEFQDNRRLYDWVLENISIERPLPHQYEFSRLNLEGTLTSKRKLLKLVNDEIVDGWNDPRMPTISGLRRRGYTPASLREFCRRIGVTKQDNVVEYSALEACIREDLNENAPRAMAVIDPVRVVIENFESEAVLTAPNHPNRPELGERQLPFTKELYIDRADFREEANKQYKRLVLGKEVRLRNAYVIKAERVEKDANGEITTIFCTYDPETLGKNPADGRKVKGVIHWVSAVNNHPAEFRLYDRLFTVPNPGAEDDIESVLNPNSLVIKQGFVEQSLANAEAEKGYQFEREGYFCADSKDSRPEHLVFNLTVSLKEGF.

A 'HIGH' region motif is present at residues 42-52 (PEPNGYLHIGH). Residues 43 to 45 (EPN) and 49 to 55 (HIGHAKS) each bind ATP. Positions 75 and 220 each coordinate L-glutamine. ATP is bound by residues threonine 239 and 270–271 (RL). The 'KMSKS' region motif lies at 277–281 (LTSKR).

The protein belongs to the class-I aminoacyl-tRNA synthetase family. In terms of assembly, monomer.

Its subcellular location is the cytoplasm. It carries out the reaction tRNA(Gln) + L-glutamine + ATP = L-glutaminyl-tRNA(Gln) + AMP + diphosphate. The sequence is that of Glutamine--tRNA ligase from Haemophilus influenzae (strain 86-028NP).